We begin with the raw amino-acid sequence, 154 residues long: Prefoldin subunit 2 (154 aa).

Disordered regions lie at residues 1 to 20 and 126 to 154; these read MADS…GKGA and LMGE…VLVS. Residues 9–18 are compositionally biased toward gly residues; sequence GKSGGSGTGK. Over residues 126 to 139 the composition is skewed to basic and acidic residues; it reads LMGEDEKPAAKENS. The span at 141 to 154 shows a compositional bias: low complexity; it reads GAGAKSSSAGVLVS.

This sequence belongs to the prefoldin subunit beta family. As to quaternary structure, heterohexamer of two PFD-alpha type and four PFD-beta type subunits. Component of the PAQosome complex which is responsible for the biogenesis of several protein complexes and which consists of R2TP complex members RUVBL1, RUVBL2, RPAP3 and PIH1D1, URI complex members PFDN2, PFDN6, PDRG1, UXT and URI1 as well as ASDURF, POLR2E and DNAAF10/WDR92. Interacts with URI1; the interaction is phosphorylation-dependent and occurs in a growth-dependent manner.

The protein localises to the nucleus. It localises to the cytoplasm. It is found in the mitochondrion. Functionally, binds specifically to cytosolic chaperonin (c-CPN) and transfers target proteins to it. Binds to nascent polypeptide chain and promotes folding in an environment in which there are many competing pathways for nonnative proteins. This is Prefoldin subunit 2 (Pfdn2) from Rattus norvegicus (Rat).